The sequence spans 174 residues: UPF0200 protein PAE1629 (174 aa).

9–16 is an ATP binding site; that stretch reads GLPGSGKT.

Belongs to the UPF0200 family.

The polypeptide is UPF0200 protein PAE1629 (Pyrobaculum aerophilum (strain ATCC 51768 / DSM 7523 / JCM 9630 / CIP 104966 / NBRC 100827 / IM2)).